The chain runs to 363 residues: MSLQSIKYKRGSLEILDQLLLPVVSKYLPVRGVEDGWKVINKMQVRGAPAIAIVGCLSLAVEIYPEEFETKKSLRQEIEGKLNYLVSARPTAVNMKISADELITLANELSKNDDVTVANMKQRFLDATEAMLEKDIADNRAIGSNGAKAILERVAEATGSPGSASPVRVLTHCNTGSLATAGYGTALGVVRHLSELGKLEHVYCTETRPYNQGARLTAYELVHEKLPATLVLDSMVAALFRVKNVAAVVVGADRVAANGDTANKIGTYQIAVVAKHHGVPFYVAAPLTSIDLQIPSGEHIIIEVRPDREMTHVGEHRIAAPGINCWNPAFDVTPASLITGIITEHGVFKPSTLKDEIAKLIEL.

Catalysis depends on Asp253, which acts as the Proton donor.

Belongs to the eIF-2B alpha/beta/delta subunits family. MtnA subfamily.

The protein localises to the cytoplasm. It localises to the nucleus. The catalysed reaction is 5-(methylsulfanyl)-alpha-D-ribose 1-phosphate = 5-(methylsulfanyl)-D-ribulose 1-phosphate. It functions in the pathway amino-acid biosynthesis; L-methionine biosynthesis via salvage pathway; L-methionine from S-methyl-5-thio-alpha-D-ribose 1-phosphate: step 1/6. Catalyzes the interconversion of methylthioribose-1-phosphate (MTR-1-P) into methylthioribulose-1-phosphate (MTRu-1-P). This Drosophila grimshawi (Hawaiian fruit fly) protein is Methylthioribose-1-phosphate isomerase.